The following is a 316-amino-acid chain: Ornithine carbamoyltransferase (316 aa).

Carbamoyl phosphate-binding positions include 57–60 (STRT), Q84, R108, and 135–138 (HPCQ). L-ornithine-binding positions include N166, D230, and 234 to 235 (SM). Carbamoyl phosphate contacts are provided by residues 269–270 (CL) and R297.

It belongs to the aspartate/ornithine carbamoyltransferase superfamily. OTCase family.

Its subcellular location is the cytoplasm. The enzyme catalyses carbamoyl phosphate + L-ornithine = L-citrulline + phosphate + H(+). It functions in the pathway amino-acid degradation; L-arginine degradation via ADI pathway; carbamoyl phosphate from L-arginine: step 2/2. Functionally, reversibly catalyzes the transfer of the carbamoyl group from carbamoyl phosphate (CP) to the N(epsilon) atom of ornithine (ORN) to produce L-citrulline. The sequence is that of Ornithine carbamoyltransferase from Bacillus anthracis (strain CDC 684 / NRRL 3495).